A 557-amino-acid chain; its full sequence is Ribonuclease J 2 (557 aa).

4 residues coordinate Zn(2+): H76, H78, H144, and E166. Residue 366–370 (HASSH) coordinates substrate.

Belongs to the metallo-beta-lactamase superfamily. RNA-metabolizing metallo-beta-lactamase-like family. Bacterial RNase J subfamily. In terms of assembly, homodimer, may be a subunit of the RNA degradosome. Requires Zn(2+) as cofactor.

The protein localises to the cytoplasm. In terms of biological role, an RNase that has 5'-3' exonuclease and possibly endoonuclease activity. Involved in maturation of rRNA and in some organisms also mRNA maturation and/or decay. In Staphylococcus aureus (strain MRSA252), this protein is Ribonuclease J 2.